The primary structure comprises 453 residues: Serine/threonine-protein phosphatase 2A 55 kDa regulatory subunit B delta isoform (453 aa).

WD repeat units lie at residues 32 to 71 (AEAD…KGRA), 97 to 138 (EIEE…KRAE), 181 to 219 (AHTY…RSFN), and 230 to 270 (ELTE…LCDR). A Phosphoserine modification is found at Ser-285. WD repeat units follow at residues 289-327 (EIIS…RPVE), 344-385 (ENDC…DVTL), and 420-452 (DFNK…QDKI). Position 305 is a phosphotyrosine (Tyr-305). Phosphothreonine is present on Thr-308.

Belongs to the phosphatase 2A regulatory subunit B family. PP2A consists of a common heterodimeric core enzyme, composed of a 36 kDa catalytic subunit (subunit C) and a 65 kDa constant regulatory subunit (PR65 or subunit A), that associates with a variety of regulatory subunits. Proteins that associate with the core dimer include three families of regulatory subunits B (the R2/B/PR55/B55, R3/B''/PR72/PR130/PR59 and R5/B'/B56 families), the 48 kDa variable regulatory subunit, viral proteins, and cell signaling molecules. Interacts with IER5.

It is found in the cytoplasm. Substrate-recognition subunit of protein phosphatase 2A (PP2A) that plays a key role in cell cycle by controlling mitosis entry and exit. Involved in chromosome clustering during late mitosis by mediating dephosphorylation of MKI67. The activity of PP2A complexes containing PPP2R2D (PR55-delta) fluctuate during the cell cycle: the activity is high in interphase and low in mitosis. The sequence is that of Serine/threonine-protein phosphatase 2A 55 kDa regulatory subunit B delta isoform from Mus musculus (Mouse).